The sequence spans 730 residues: Procollagen-lysine,2-oxoglutarate 5-dioxygenase 1 (730 aa).

An N-terminal signal peptide occupies residues 1–20; sequence MVPPAVLLPWVVLPLLGVQG. 3 N-linked (GlcNAc...) asparagine glycosylation sites follow: N200, N403, and N541. The region spanning 639–730 is the Fe2OG dioxygenase domain; sequence QFELAFVVRY…RYIAVSFIDP (92 aa). H659 and D661 together coordinate Fe cation. N-linked (GlcNAc...) asparagine glycosylation occurs at N689. H711 is a binding site for Fe cation. R721 is an active-site residue.

Homodimer. Fe(2+) serves as cofactor. Requires L-ascorbate as cofactor.

The protein localises to the rough endoplasmic reticulum membrane. The enzyme catalyses L-lysyl-[collagen] + 2-oxoglutarate + O2 = (5R)-5-hydroxy-L-lysyl-[collagen] + succinate + CO2. Its function is as follows. Forms hydroxylysine residues in -Xaa-Lys-Gly- sequences in collagens. These hydroxylysines serve as sites of attachment for carbohydrate units and are essential for the stability of the intermolecular collagen cross-links. This is Procollagen-lysine,2-oxoglutarate 5-dioxygenase 1 (PLOD1) from Gallus gallus (Chicken).